We begin with the raw amino-acid sequence, 1137 residues long: Phytochrome C (1137 aa).

Over residues methionine 1 to alanine 18 the composition is skewed to low complexity. Positions methionine 1–valine 27 are disordered. The GAF domain maps to asparagine 217 to valine 400. Cysteine 322 is a binding site for phytochromobilin. 2 PAS domains span residues valine 620 to isoleucine 690 and isoleucine 750 to serine 824. Positions tyrosine 904–glutamine 1124 constitute a Histidine kinase domain.

The protein belongs to the phytochrome family. Homodimer. Contains one covalently linked phytochromobilin chromophore.

In terms of biological role, regulatory photoreceptor which exists in two forms that are reversibly interconvertible by light: the Pr form that absorbs maximally in the red region of the spectrum and the Pfr form that absorbs maximally in the far-red region. Photoconversion of Pr to Pfr induces an array of morphogenic responses, whereas reconversion of Pfr to Pr cancels the induction of those responses. Pfr controls the expression of a number of nuclear genes including those encoding the small subunit of ribulose-bisphosphate carboxylase, chlorophyll A/B binding protein, protochlorophyllide reductase, rRNA, etc. It also controls the expression of its own gene(s) in a negative feedback fashion. This chain is Phytochrome C (PHYC), found in Oryza sativa subsp. japonica (Rice).